We begin with the raw amino-acid sequence, 290 residues long: ADP-ribosylation factor-like protein 13A (290 aa).

GTP-binding positions include 28–35 (GLNNSGKT), 71–75 (DLNGD), and 130–133 (NKQD). Residues 204–226 (SKNNTGSGERCSSHSFSTRTGMS) are disordered.

This sequence belongs to the small GTPase superfamily. Arf family.

This is ADP-ribosylation factor-like protein 13A (ARL13A) from Homo sapiens (Human).